The primary structure comprises 45 residues: Photosystem II reaction center protein K (45 aa).

Positions 1–8 are excised as a propeptide; sequence MEGILFLA. The chain crosses the membrane as a helical span at residues 24–44; the sequence is APVIPVFFLLLAFVWQAAVGF.

It belongs to the PsbK family. In terms of assembly, PSII is composed of 1 copy each of membrane proteins PsbA, PsbB, PsbC, PsbD, PsbE, PsbF, PsbH, PsbI, PsbJ, PsbK, PsbL, PsbM, PsbT, PsbX, PsbY, PsbZ, Psb30/Ycf12, at least 3 peripheral proteins of the oxygen-evolving complex and a large number of cofactors. It forms dimeric complexes.

The protein localises to the plastid. It localises to the chloroplast thylakoid membrane. Functionally, one of the components of the core complex of photosystem II (PSII). PSII is a light-driven water:plastoquinone oxidoreductase that uses light energy to abstract electrons from H(2)O, generating O(2) and a proton gradient subsequently used for ATP formation. It consists of a core antenna complex that captures photons, and an electron transfer chain that converts photonic excitation into a charge separation. This Guillardia theta (Cryptophyte) protein is Photosystem II reaction center protein K.